A 572-amino-acid polypeptide reads, in one-letter code: Proline--tRNA ligase (572 aa).

The protein belongs to the class-II aminoacyl-tRNA synthetase family. ProS type 1 subfamily. In terms of assembly, homodimer.

It is found in the cytoplasm. The catalysed reaction is tRNA(Pro) + L-proline + ATP = L-prolyl-tRNA(Pro) + AMP + diphosphate. In terms of biological role, catalyzes the attachment of proline to tRNA(Pro) in a two-step reaction: proline is first activated by ATP to form Pro-AMP and then transferred to the acceptor end of tRNA(Pro). As ProRS can inadvertently accommodate and process non-cognate amino acids such as alanine and cysteine, to avoid such errors it has two additional distinct editing activities against alanine. One activity is designated as 'pretransfer' editing and involves the tRNA(Pro)-independent hydrolysis of activated Ala-AMP. The other activity is designated 'posttransfer' editing and involves deacylation of mischarged Ala-tRNA(Pro). The misacylated Cys-tRNA(Pro) is not edited by ProRS. This chain is Proline--tRNA ligase, found in Escherichia coli O139:H28 (strain E24377A / ETEC).